Consider the following 136-residue polypeptide: Large ribosomal subunit protein uL16 (136 aa).

The protein belongs to the universal ribosomal protein uL16 family. In terms of assembly, part of the 50S ribosomal subunit.

Its function is as follows. Binds 23S rRNA and is also seen to make contacts with the A and possibly P site tRNAs. This Orientia tsutsugamushi (strain Ikeda) (Rickettsia tsutsugamushi) protein is Large ribosomal subunit protein uL16.